Reading from the N-terminus, the 360-residue chain is MEAAQGRLGPEPELSVGAEHQAATFSGRPSRTPSKPPSVRTLSGEEEAESVGVSSRHPRASPKTWSGSIAHGPELDTWEDKPSSRATPSGARGRRGVPGSEHAPPPSSWYPEPEPSEDQPSALRVCRRGSPGGVEMNVELPQQEGDDDDDEDEEAAAGRAGRSFPSRLQDSRSLDGLSGACGGGGSSSSGETGAGGGRRATISSPLELEGTVSRHGDLTHFVANNLQLKIRLSGAPPPVPPASVRPCLTPAPTPTIPPIDPDVLRDLERLSRELGGRVDRLLRGLGGAVQELTALSVGCIQTYRDAVDSLGEAVDMSIKGMYTLLARCEELERALQPVQGLARQVRDIRRTLEVLEALCK.

Residues 1–201 (MEAAQGRLGP…TGAGGGRRAT (201 aa)) are disordered. Positions 23-33 (ATFSGRPSRTP) are enriched in polar residues. Threonine 41 carries the post-translational modification Phosphothreonine. Phosphoserine is present on serine 130. Acidic residues predominate over residues 144–155 (EGDDDDDEDEEA). Serine 173 carries the post-translational modification Phosphoserine. Gly residues predominate over residues 179–198 (GACGGGGSSSSGETGAGGGR). Threonine 201 is modified (phosphothreonine). Phosphoserine is present on serine 204.

It belongs to the BORCS6 family. As to quaternary structure, component of the BLOC-one-related complex (BORC) which is composed of BLOC1S1, BLOC1S2, BORCS5, BORCS6, BORCS7, BORCS8, KXD1 and SNAPIN.

It localises to the lysosome membrane. In terms of biological role, as part of the BORC complex may play a role in lysosomes movement and localization at the cell periphery. Associated with the cytosolic face of lysosomes, the BORC complex may recruit ARL8B and couple lysosomes to microtubule plus-end-directed kinesin motor. The polypeptide is BLOC-1-related complex subunit 6 (Mus musculus (Mouse)).